We begin with the raw amino-acid sequence, 262 residues long: Ribosomal RNA small subunit methyltransferase A (262 aa).

Positions 18, 43, 65, 91, and 110 each coordinate S-adenosyl-L-methionine.

It belongs to the class I-like SAM-binding methyltransferase superfamily. rRNA adenine N(6)-methyltransferase family. RsmA subfamily.

Its subcellular location is the cytoplasm. The enzyme catalyses adenosine(1518)/adenosine(1519) in 16S rRNA + 4 S-adenosyl-L-methionine = N(6)-dimethyladenosine(1518)/N(6)-dimethyladenosine(1519) in 16S rRNA + 4 S-adenosyl-L-homocysteine + 4 H(+). Its function is as follows. Specifically dimethylates two adjacent adenosines (A1518 and A1519) in the loop of a conserved hairpin near the 3'-end of 16S rRNA in the 30S particle. May play a critical role in biogenesis of 30S subunits. This is Ribosomal RNA small subunit methyltransferase A from Ehrlichia canis (strain Jake).